Here is a 145-residue protein sequence, read N- to C-terminus: ATP synthase epsilon chain (145 aa).

Residues 100–123 are disordered; the sequence is RAQRAKQRAEDAIKTASEKHDSDE. Over residues 106–123 the composition is skewed to basic and acidic residues; sequence QRAEDAIKTASEKHDSDE.

This sequence belongs to the ATPase epsilon chain family. In terms of assembly, F-type ATPases have 2 components, CF(1) - the catalytic core - and CF(0) - the membrane proton channel. CF(1) has five subunits: alpha(3), beta(3), gamma(1), delta(1), epsilon(1). CF(0) has three main subunits: a, b and c.

Its subcellular location is the cell membrane. Its function is as follows. Produces ATP from ADP in the presence of a proton gradient across the membrane. In Latilactobacillus sakei subsp. sakei (strain 23K) (Lactobacillus sakei subsp. sakei), this protein is ATP synthase epsilon chain.